The chain runs to 122 residues: Large ribosomal subunit protein uL14c (122 aa).

It belongs to the universal ribosomal protein uL14 family. In terms of assembly, part of the 50S ribosomal subunit.

It localises to the plastid. The protein localises to the chloroplast. Its function is as follows. Binds to 23S rRNA. This Eucalyptus globulus subsp. globulus (Tasmanian blue gum) protein is Large ribosomal subunit protein uL14c.